A 201-amino-acid chain; its full sequence is Large ribosomal subunit protein bL25 (201 aa).

Belongs to the bacterial ribosomal protein bL25 family. CTC subfamily. As to quaternary structure, part of the 50S ribosomal subunit; part of the 5S rRNA/L5/L18/L25 subcomplex. Contacts the 5S rRNA. Binds to the 5S rRNA independently of L5 and L18.

In terms of biological role, this is one of the proteins that binds to the 5S RNA in the ribosome where it forms part of the central protuberance. The polypeptide is Large ribosomal subunit protein bL25 (Burkholderia cenocepacia (strain HI2424)).